The sequence spans 623 residues: Chaperone protein DnaK (623 aa).

Thr175 bears the Phosphothreonine; by autocatalysis mark. The disordered stretch occupies residues 578 to 623 (ANPEGAPGAGFDPNNMGGANAGNASAGNDKKDDNVVDADFKVEDDK). Residues 591–604 (NNMGGANAGNASAG) are compositionally biased toward low complexity. The span at 605-623 (NDKKDDNVVDADFKVEDDK) shows a compositional bias: basic and acidic residues.

This sequence belongs to the heat shock protein 70 family.

Its function is as follows. Acts as a chaperone. This Clostridium botulinum (strain 657 / Type Ba4) protein is Chaperone protein DnaK.